The primary structure comprises 447 residues: Nuclear envelope integral membrane protein 2 (447 aa).

A signal peptide spans 1–28 (MGPRRLPWARPGPALGLLLLALAGAVPA). A run of 5 helical transmembrane segments spans residues 144–164 (EMLD…FHFA), 173–193 (FFYL…VLLA), 202–222 (STFW…IYCF), 235–255 (IYVL…CYQH), and 275–295 (AFVF…IIAV). Positions 410–438 (TRTESEQDETTSYIHEGDDENEDEIHEPI) are disordered.

This sequence belongs to the NEMP family.

It is found in the nucleus inner membrane. The protein is Nuclear envelope integral membrane protein 2 (NEMP2) of Gallus gallus (Chicken).